A 39-amino-acid chain; its full sequence is Photosystem II reaction center protein Psb30 (39 aa).

A helical transmembrane segment spans residues 12-32; it reads IFQLTFVALIMLAGPFVIFLL.

Belongs to the Psb30/Ycf12 family. As to quaternary structure, PSII is composed of 1 copy each of membrane proteins PsbA, PsbB, PsbC, PsbD, PsbE, PsbF, PsbH, PsbI, PsbJ, PsbK, PsbL, PsbM, PsbT, PsbX, PsbY, PsbZ, Psb30/Ycf12, peripheral proteins PsbO, CyanoQ (PsbQ), PsbU, PsbV and a large number of cofactors. It forms dimeric complexes.

Its subcellular location is the cellular thylakoid membrane. A core subunit of photosystem II (PSII), probably helps stabilize the reaction center. This Microcystis aeruginosa (strain NIES-843 / IAM M-2473) protein is Photosystem II reaction center protein Psb30.